The chain runs to 213 residues: Outer envelope pore protein 24B, chloroplastic (213 aa).

Topologically, residues 1-3 are cytoplasmic; it reads MAM. Residues 4 to 13 traverse the membrane as a beta stranded segment; it reads KASIKGKYDT. Residues 14-18 are Chloroplast intermembrane-facing; it reads DKTSG. A beta stranded transmembrane segment spans residues 19–28; sequence IGSLAFNAGD. At 29 to 32 the chain is on the cytoplasmic side; sequence IKLR. The chain crosses the membrane as a beta stranded span at residues 33-42; the sequence is ATMTDATLVA. Residues 43–55 lie on the Chloroplast intermembrane side of the membrane; that stretch reads GPTLTGLALAVEK. Residues 56–64 form a beta stranded membrane-spanning segment; sequence PGSFIVEYN. Residues 65 to 70 are Cytoplasmic-facing; sequence VPKKDV. The beta stranded transmembrane segment at 71 to 80 threads the bilayer; that stretch reads RFQFMNTVRI. Residues 81–93 lie on the Chloroplast intermembrane side of the membrane; sequence AEKPLNLTYIHSR. Residues 94–103 traverse the membrane as a beta stranded segment; it reads ADNRTIVDGS. At 104 to 108 the chain is on the cytoplasmic side; the sequence is LVIDS. A beta stranded transmembrane segment spans residues 109–118; sequence ANKLSANHMV. Residues 119-122 are Chloroplast intermembrane-facing; sequence GTNN. The chain crosses the membrane as a beta stranded span at residues 123–132; sequence CKIKYTYAHG. The Cytoplasmic segment spans residues 133 to 144; the sequence is GLATFEPCYDLA. Residues 145-156 traverse the membrane as a beta stranded segment; sequence KNTWDFAVSRRF. Topologically, residues 157 to 159 are chloroplast intermembrane; the sequence is YSG. The beta stranded transmembrane segment at 160–168 threads the bilayer; the sequence is DNVRATYQT. Residues 169 to 170 are Cytoplasmic-facing; the sequence is SS. The beta stranded transmembrane segment at 171–179 threads the bilayer; the sequence is KLLGMEWSR. At 180 to 201 the chain is on the chloroplast intermembrane side; the sequence is NNKASGFKVCASVNLADELKTP. The chain crosses the membrane as a beta stranded span at residues 202-211; the sequence is KLTAETTWNL. The Cytoplasmic segment spans residues 212–213; the sequence is EM.

This sequence belongs to the plastid outer envelope porin OEP24 (TC 1.B.28) family. As to quaternary structure, homooligomers form large rather nonselective pores in plastidial outer membranes.

It is found in the plastid. The protein resides in the etioplast membrane. Its subcellular location is the chloroplast outer membrane. High-conductance voltage-dependent solute channel with a slight selectivity for cations transporting triosephosphates, dicarboxylic acids, ATP, inorganic phosphate (Pi), sugars, and positively or negatively charged amino acids. In Arabidopsis thaliana (Mouse-ear cress), this protein is Outer envelope pore protein 24B, chloroplastic (OEP24B).